Here is a 627-residue protein sequence, read N- to C-terminus: Chaperone protein DnaK (627 aa).

T197 carries the post-translational modification Phosphothreonine; by autocatalysis. Positions 596-615 are enriched in low complexity; the sequence is MYAQGGDQGQQAAPQQEQSG. The segment at 596–627 is disordered; that stretch reads MYAQGGDQGQQAAPQQEQSGDNVEDVEFEEVK. A compositionally biased stretch (acidic residues) spans 617–627; it reads NVEDVEFEEVK.

This sequence belongs to the heat shock protein 70 family.

Acts as a chaperone. This Flavobacterium johnsoniae (strain ATCC 17061 / DSM 2064 / JCM 8514 / BCRC 14874 / CCUG 350202 / NBRC 14942 / NCIMB 11054 / UW101) (Cytophaga johnsonae) protein is Chaperone protein DnaK.